The chain runs to 295 residues: Hepatic leukemia factor (295 aa).

The segment covering proline 36–aspartate 52 has biased composition (basic and acidic residues). Disordered regions lie at residues proline 36–tyrosine 76 and leucine 92–arginine 149. Residues aspartate 225–tyrosine 288 enclose the bZIP domain. Positions lysine 227–arginine 247 are basic motif. A leucine-zipper region spans residues leucine 248 to isoleucine 255.

The protein belongs to the bZIP family. PAR subfamily. Binds DNA specifically as homodimer or heterodimer with other PAR factors.

It is found in the nucleus. This Mus musculus (Mouse) protein is Hepatic leukemia factor (Hlf).